The following is a 426-amino-acid chain: Serine hydroxymethyltransferase (426 aa).

(6S)-5,6,7,8-tetrahydrofolate is bound by residues L121 and 125–127 (GHL). K230 is subject to N6-(pyridoxal phosphate)lysine. 354–356 (SPF) serves as a coordination point for (6S)-5,6,7,8-tetrahydrofolate.

Belongs to the SHMT family. As to quaternary structure, homodimer. Pyridoxal 5'-phosphate is required as a cofactor.

Its subcellular location is the cytoplasm. The catalysed reaction is (6R)-5,10-methylene-5,6,7,8-tetrahydrofolate + glycine + H2O = (6S)-5,6,7,8-tetrahydrofolate + L-serine. Its pathway is one-carbon metabolism; tetrahydrofolate interconversion. The protein operates within amino-acid biosynthesis; glycine biosynthesis; glycine from L-serine: step 1/1. Its function is as follows. Catalyzes the reversible interconversion of serine and glycine with tetrahydrofolate (THF) serving as the one-carbon carrier. This reaction serves as the major source of one-carbon groups required for the biosynthesis of purines, thymidylate, methionine, and other important biomolecules. Also exhibits THF-independent aldolase activity toward beta-hydroxyamino acids, producing glycine and aldehydes, via a retro-aldol mechanism. This Acaryochloris marina (strain MBIC 11017) protein is Serine hydroxymethyltransferase.